We begin with the raw amino-acid sequence, 885 residues long: MTTLSPDAFAGHTPMMQQYLRIKADHPDTLVFYRMGDFYELFFEDAAKAARLLDLTLTQRGASAGTPIKMAGVPHHAVEQYLAKLVKMGESVAICEQIGDPATSKGPVERKVVRVVTPGTLTDAALLSDKNDVYLLAMCTGHNKRGVAVNIGLAWLNLASGALRLAEIEPDQLAAALERIRPAEILTPDGATDAVPAGAGASKRVPAWHFDIASGTQRLCDQLDVASLDGFGAHSLTSACGAAGALLLYAAATQGQQLRHVRSLKVENETEYIGLDPATRRNLELTETLRGTESPTLYSLLDTCCTTMGSRLLRHWLHHPPRASVAAQSRQQAIGALLDAPANASLDALRSALRQIADVERITGRLALLSARPRDLSSLRDTFAALPALRERISAIVANADSLTRVDAALAPPAECLDLLTSAIAPEPAAMVRDGGVIARGYDAELDELRDISENCGQFLIDLEARERTRTGIANLRVEYNKVHGFYIEVTRGQTDKVPDDYRRRQTLKNAERYITPELKTFEDKALSAQERALARERALYDAVLQALLPFIPECQRVASALAELDLLAAFAERASALDWVAPTFTDEIGIEIEQGRHPVVEAQVEQFIANDCRFGTERKLLLITGPNMGGKSTFMRQTALIALMAYVGSYVPAKSACFGPIDRIFTRIGAADDLAGGRSTFMVEMTEAAAILNDATPQSLVLMDEIGRGTSTFDGLALAWAIARHLLAHNACYTLFATHYFELTQLPAEFPQAANVHLSAVEHGHGIVFLHAVNEGPANQSYGLQVAQLAGVPAPVIRAARKHLAYLEQQSASQHTPQLDLFSAPPVAADDLECADAPALPDTPHPALEKLRDIDPDDLKPREALDLLYELRTLVRSHDADGHA.

626 to 633 (GPNMGGKS) provides a ligand contact to ATP.

The protein belongs to the DNA mismatch repair MutS family.

Functionally, this protein is involved in the repair of mismatches in DNA. It is possible that it carries out the mismatch recognition step. This protein has a weak ATPase activity. This chain is DNA mismatch repair protein MutS, found in Burkholderia lata (strain ATCC 17760 / DSM 23089 / LMG 22485 / NCIMB 9086 / R18194 / 383).